The following is a 1722-amino-acid chain: Signal-induced proliferation-associated 1-like protein 2 (1722 aa).

2 disordered regions span residues Met-1–Gln-29 and Met-45–Pro-73. Positions Glu-57–Ala-66 are enriched in gly residues. Residues Ser-149, Ser-380, and Ser-384 each carry the phosphoserine modification. A disordered region spans residues Ala-362–Asn-404. Over residues Ser-384–Ser-403 the composition is skewed to basic and acidic residues. Positions Leu-596 to Leu-813 constitute a Rap-GAP domain. Residues Glu-951 to Glu-1027 form the PDZ domain. At Ser-1030 the chain carries Phosphoserine. 3 disordered regions span residues His-1068–Asp-1172, Glu-1197–Gly-1246, and Ala-1328–Gly-1361. 2 stretches are compositionally biased toward low complexity: residues Leu-1091 to Ala-1103 and Ser-1120 to Pro-1131. Positions Glu-1197–Asp-1218 are enriched in basic and acidic residues. Residues Ser-1220–Asn-1237 are compositionally biased toward low complexity. The residue at position 1245 (Ser-1245) is a Phosphoserine. Low complexity predominate over residues Ala-1328–His-1355. Residues Ser-1461, Ser-1472, Ser-1478, Ser-1488, Ser-1549, Ser-1552, and Ser-1591 each carry the phosphoserine modification. The stretch at Ser-1652 to Glu-1712 forms a coiled coil.

This Rattus norvegicus (Rat) protein is Signal-induced proliferation-associated 1-like protein 2 (Sipa1l2).